Consider the following 143-residue polypeptide: Nucleoside diphosphate kinase (143 aa).

Positions 11, 59, 87, 93, 104, and 114 each coordinate ATP. Residue H117 is the Pros-phosphohistidine intermediate of the active site.

Belongs to the NDK family. In terms of assembly, homotetramer. Mg(2+) is required as a cofactor.

The protein localises to the cytoplasm. The enzyme catalyses a 2'-deoxyribonucleoside 5'-diphosphate + ATP = a 2'-deoxyribonucleoside 5'-triphosphate + ADP. The catalysed reaction is a ribonucleoside 5'-diphosphate + ATP = a ribonucleoside 5'-triphosphate + ADP. Major role in the synthesis of nucleoside triphosphates other than ATP. The ATP gamma phosphate is transferred to the NDP beta phosphate via a ping-pong mechanism, using a phosphorylated active-site intermediate. The chain is Nucleoside diphosphate kinase from Pseudoalteromonas atlantica (strain T6c / ATCC BAA-1087).